The chain runs to 129 residues: Ribosome-binding factor A (129 aa).

It belongs to the RbfA family. Monomer. Binds 30S ribosomal subunits, but not 50S ribosomal subunits or 70S ribosomes.

The protein localises to the cytoplasm. Its function is as follows. One of several proteins that assist in the late maturation steps of the functional core of the 30S ribosomal subunit. Associates with free 30S ribosomal subunits (but not with 30S subunits that are part of 70S ribosomes or polysomes). Required for efficient processing of 16S rRNA. May interact with the 5'-terminal helix region of 16S rRNA. This chain is Ribosome-binding factor A, found in Actinobacillus succinogenes (strain ATCC 55618 / DSM 22257 / CCUG 43843 / 130Z).